The primary structure comprises 467 residues: ATP synthase subunit beta (467 aa).

156–163 (GGAGVGKT) contributes to the ATP binding site.

The protein belongs to the ATPase alpha/beta chains family. F-type ATPases have 2 components, CF(1) - the catalytic core - and CF(0) - the membrane proton channel. CF(1) has five subunits: alpha(3), beta(3), gamma(1), delta(1), epsilon(1). CF(0) has three main subunits: a(1), b(2) and c(9-12). The alpha and beta chains form an alternating ring which encloses part of the gamma chain. CF(1) is attached to CF(0) by a central stalk formed by the gamma and epsilon chains, while a peripheral stalk is formed by the delta and b chains.

Its subcellular location is the cell inner membrane. It carries out the reaction ATP + H2O + 4 H(+)(in) = ADP + phosphate + 5 H(+)(out). Its function is as follows. Produces ATP from ADP in the presence of a proton gradient across the membrane. The catalytic sites are hosted primarily by the beta subunits. The protein is ATP synthase subunit beta of Cupriavidus pinatubonensis (strain JMP 134 / LMG 1197) (Cupriavidus necator (strain JMP 134)).